A 278-amino-acid polypeptide reads, in one-letter code: Mediator of RNA polymerase II transcription subunit 18 (278 aa).

This sequence belongs to the Mediator complex subunit 18 family. As to quaternary structure, component of the Mediator complex.

It localises to the nucleus. In terms of biological role, component of the Mediator complex, a coactivator involved in the regulated transcription of nearly all RNA polymerase II-dependent genes. Mediator functions as a bridge to convey information from gene-specific regulatory proteins to the basal RNA polymerase II transcription machinery. Mediator is recruited to promoters by direct interactions with regulatory proteins and serves as a scaffold for the assembly of a functional preinitiation complex with RNA polymerase II and the general transcription factors. The sequence is that of Mediator of RNA polymerase II transcription subunit 18 (srb5) from Aspergillus clavatus (strain ATCC 1007 / CBS 513.65 / DSM 816 / NCTC 3887 / NRRL 1 / QM 1276 / 107).